We begin with the raw amino-acid sequence, 327 residues long: DNA-directed RNA polymerase subunit alpha (327 aa).

Residues 1–231 (MIYQMQMPAK…DHIMYFANFS (231 aa)) are alpha N-terminal domain (alpha-NTD). The tract at residues 247–327 (DEFESMRKLL…GMDITRYQMK (81 aa)) is alpha C-terminal domain (alpha-CTD).

It belongs to the RNA polymerase alpha chain family. As to quaternary structure, homodimer. The RNAP catalytic core consists of 2 alpha, 1 beta, 1 beta' and 1 omega subunit. When a sigma factor is associated with the core the holoenzyme is formed, which can initiate transcription.

The catalysed reaction is RNA(n) + a ribonucleoside 5'-triphosphate = RNA(n+1) + diphosphate. Its function is as follows. DNA-dependent RNA polymerase catalyzes the transcription of DNA into RNA using the four ribonucleoside triphosphates as substrates. The polypeptide is DNA-directed RNA polymerase subunit alpha (Chlorobium phaeobacteroides (strain DSM 266 / SMG 266 / 2430)).